We begin with the raw amino-acid sequence, 290 residues long: MDKIIKSIAQSGAFRAYVLDSTETVALAQEKHNTLSSSTVALGRTLIANQILAANQKGDSKITVKVIGDSSFGHIISVADTKGHVKGYIQNTGVDIKKTATGEVLVGPFMGNGHFVTIIDYGTGNPYTSTTPLITGEIGEDFAYYLTESEQTPSAIGLNVLLDENDKVKVAGGFMVQVLPGASEEEIARYEKRLQEMPAISHLLASKNHVDALLEAIYGDEPYKRLSEEPLSFQCDCSRERFEAALMTLPKADLQAMIDEDKGAEIVCQFCGTKYQFNESDMEALINDKA.

Cystine bridges form between Cys235/Cys237 and Cys268/Cys271.

This sequence belongs to the HSP33 family. Post-translationally, under oxidizing conditions two disulfide bonds are formed involving the reactive cysteines. Under reducing conditions zinc is bound to the reactive cysteines and the protein is inactive.

It is found in the cytoplasm. Its function is as follows. Redox regulated molecular chaperone. Protects both thermally unfolding and oxidatively damaged proteins from irreversible aggregation. Plays an important role in the bacterial defense system toward oxidative stress. The chain is 33 kDa chaperonin from Streptococcus pyogenes serotype M5 (strain Manfredo).